Consider the following 275-residue polypeptide: Phosphonoacetaldehyde hydrolase (275 aa).

The active-site Nucleophile is Asp-15. Mg(2+) contacts are provided by Asp-15 and Ala-17. Residue Lys-56 is the Schiff-base intermediate with substrate of the active site. Mg(2+) is bound at residue Asp-189.

The protein belongs to the HAD-like hydrolase superfamily. PhnX family. As to quaternary structure, homodimer. The cofactor is Mg(2+).

The enzyme catalyses phosphonoacetaldehyde + H2O = acetaldehyde + phosphate + H(+). Inhibited by phosphite, moderately inhibited by phosphonic acids, the corresponding aminophosphonic acids activate the enzyme. Involved in phosphonate degradation. This chain is Phosphonoacetaldehyde hydrolase, found in Pseudomonas aeruginosa (strain ATCC 15692 / DSM 22644 / CIP 104116 / JCM 14847 / LMG 12228 / 1C / PRS 101 / PAO1).